The following is a 396-amino-acid chain: MELPRLENVDLSGKRVFLRVDFNVPIENGKVTDKTRIEKTLPTIELLIKKGARIIIASHLGRPKGQTNPEFSLAPVVEVFKGLVKSNVYFSKTVIGDEPIKLSKELRDGEILVIENVRFHKEEEENEPGFSKKLAALADVYVNDAFGAAHRAHASTEGIAHLLPAYAGLLMHKEIVELSALLAKPARPFVAIIGGSKVSSKIKVLNNLFDKVNHLLIGGGMAYTFLKSRAVPVGNSLVEKDFEVQAFQLIEKAGVAGVDLQLPVDHIIGDQFNEKAKTKSVDKMGILDGWMGMDIGSKTVSNYEKIIKNAGTIFWNGPMGVFEMDKFTGGTMAIAKAISKSKAKTVVGGGDSIAAINKAKVADKITHISTGGGASLEFMEGRKLPGVEALKKKVSE.

Residues 21-23 (DFN), Arg36, 59-62 (HLGR), Arg118, and Arg151 each bind substrate. ATP-binding positions include Lys201, Gly292, Glu323, and 349–352 (GGDS).

Belongs to the phosphoglycerate kinase family. Monomer.

The protein localises to the cytoplasm. It carries out the reaction (2R)-3-phosphoglycerate + ATP = (2R)-3-phospho-glyceroyl phosphate + ADP. The protein operates within carbohydrate degradation; glycolysis; pyruvate from D-glyceraldehyde 3-phosphate: step 2/5. This chain is Phosphoglycerate kinase, found in Leptospira borgpetersenii serovar Hardjo-bovis (strain L550).